We begin with the raw amino-acid sequence, 245 residues long: MSRILLGVNIDHIATLRQARGTSYPDPVHAAAVAEHAGADGITIHLREDRRHIIDRDVYLLAKTLKTRMNFECAVTEEMLNIACEVKPTYVCLVPEKRQEVTTEGGLDVAGQLDKITAAVSRLAANGIQVSLFIDADKTQIDAAVASGAPLIEIHTGCYADAKTADEEAKELERIREMAKYAHGKGLIVNAGHGLHYHNVKPIAAIPELYELNIGHAIVARAAIDGLATAVKDMKTLMLEGRRGE.

Residue asparagine 9 coordinates 3-amino-2-oxopropyl phosphate. 11-12 (DH) is a binding site for 1-deoxy-D-xylulose 5-phosphate. Residue arginine 20 participates in 3-amino-2-oxopropyl phosphate binding. Histidine 45 functions as the Proton acceptor in the catalytic mechanism. Positions 47 and 52 each coordinate 1-deoxy-D-xylulose 5-phosphate. The Proton acceptor role is filled by glutamate 72. Threonine 102 contacts 1-deoxy-D-xylulose 5-phosphate. The Proton donor role is filled by histidine 193. Residues glycine 194 and 215-216 (GH) each bind 3-amino-2-oxopropyl phosphate.

Belongs to the PNP synthase family. In terms of assembly, homooctamer; tetramer of dimers.

It localises to the cytoplasm. It carries out the reaction 3-amino-2-oxopropyl phosphate + 1-deoxy-D-xylulose 5-phosphate = pyridoxine 5'-phosphate + phosphate + 2 H2O + H(+). Its pathway is cofactor biosynthesis; pyridoxine 5'-phosphate biosynthesis; pyridoxine 5'-phosphate from D-erythrose 4-phosphate: step 5/5. Functionally, catalyzes the complicated ring closure reaction between the two acyclic compounds 1-deoxy-D-xylulose-5-phosphate (DXP) and 3-amino-2-oxopropyl phosphate (1-amino-acetone-3-phosphate or AAP) to form pyridoxine 5'-phosphate (PNP) and inorganic phosphate. This chain is Pyridoxine 5'-phosphate synthase, found in Shewanella oneidensis (strain ATCC 700550 / JCM 31522 / CIP 106686 / LMG 19005 / NCIMB 14063 / MR-1).